We begin with the raw amino-acid sequence, 185 residues long: Ribosome-recycling factor (185 aa).

This sequence belongs to the RRF family.

The protein localises to the cytoplasm. Its function is as follows. Responsible for the release of ribosomes from messenger RNA at the termination of protein biosynthesis. May increase the efficiency of translation by recycling ribosomes from one round of translation to another. This is Ribosome-recycling factor from Pseudomonas fluorescens (strain SBW25).